The sequence spans 1039 residues: Error-prone DNA polymerase (1039 aa).

The protein belongs to the DNA polymerase type-C family. DnaE2 subfamily.

The protein resides in the cytoplasm. The catalysed reaction is DNA(n) + a 2'-deoxyribonucleoside 5'-triphosphate = DNA(n+1) + diphosphate. DNA polymerase involved in damage-induced mutagenesis and translesion synthesis (TLS). It is not the major replicative DNA polymerase. The protein is Error-prone DNA polymerase of Corynebacterium diphtheriae (strain ATCC 700971 / NCTC 13129 / Biotype gravis).